Here is a 901-residue protein sequence, read N- to C-terminus: HTH-type transcriptional regulator MalT (901 aa).

ATP is bound at residue 39-46; sequence SPAGYGKT. Residues 829–894 enclose the HTH luxR-type domain; the sequence is ELIRTSPLTQ…DAVQHAQQLL (66 aa). The segment at residues 853–872 is a DNA-binding region (H-T-H motif); it reads NEQIAGELAVAATTIKTHIR.

The protein belongs to the MalT family. In terms of assembly, monomer in solution. Oligomerizes to an active state in the presence of the positive effectors ATP and maltotriose.

With respect to regulation, activated by ATP and maltotriose, which are both required for DNA binding. In terms of biological role, positively regulates the transcription of the maltose regulon whose gene products are responsible for uptake and catabolism of malto-oligosaccharides. Specifically binds to the promoter region of its target genes, recognizing a short DNA motif called the MalT box. The polypeptide is HTH-type transcriptional regulator MalT (Salmonella agona (strain SL483)).